A 90-amino-acid chain; its full sequence is Small ribosomal subunit protein bS20 (90 aa).

Belongs to the bacterial ribosomal protein bS20 family.

Functionally, binds directly to 16S ribosomal RNA. This is Small ribosomal subunit protein bS20 from Francisella tularensis subsp. holarctica (strain FTNF002-00 / FTA).